We begin with the raw amino-acid sequence, 399 residues long: Formate-dependent phosphoribosylglycinamide formyltransferase (399 aa).

Residues 8 to 9 (EL) and Glu68 each bind N(1)-(5-phospho-beta-D-ribosyl)glycinamide. Residues Arg100, Lys141, 146 to 151 (SSGHGQ), 185 to 188 (EALA), and Glu193 contribute to the ATP site. Residues 105–308 (VLAHEELGLP…EFALHARAIL (204 aa)) enclose the ATP-grasp domain. The Mg(2+) site is built by Glu266 and Glu279. N(1)-(5-phospho-beta-D-ribosyl)glycinamide-binding positions include Asp286, Lys361, and 368-369 (RR).

It belongs to the PurK/PurT family. Homodimer.

It catalyses the reaction N(1)-(5-phospho-beta-D-ribosyl)glycinamide + formate + ATP = N(2)-formyl-N(1)-(5-phospho-beta-D-ribosyl)glycinamide + ADP + phosphate + H(+). It participates in purine metabolism; IMP biosynthesis via de novo pathway; N(2)-formyl-N(1)-(5-phospho-D-ribosyl)glycinamide from N(1)-(5-phospho-D-ribosyl)glycinamide (formate route): step 1/1. Involved in the de novo purine biosynthesis. Catalyzes the transfer of formate to 5-phospho-ribosyl-glycinamide (GAR), producing 5-phospho-ribosyl-N-formylglycinamide (FGAR). Formate is provided by PurU via hydrolysis of 10-formyl-tetrahydrofolate. The chain is Formate-dependent phosphoribosylglycinamide formyltransferase from Bifidobacterium longum (strain NCC 2705).